The following is a 545-amino-acid chain: Chaperonin GroEL (545 aa).

Residues 30-33, K51, 87-91, G415, 483-485, and D499 contribute to the ATP site; these read TLGP, DGTTT, and NAA.

The protein belongs to the chaperonin (HSP60) family. As to quaternary structure, forms a cylinder of 14 subunits composed of two heptameric rings stacked back-to-back. Interacts with the co-chaperonin GroES.

Its subcellular location is the cytoplasm. It catalyses the reaction ATP + H2O + a folded polypeptide = ADP + phosphate + an unfolded polypeptide.. Together with its co-chaperonin GroES, plays an essential role in assisting protein folding. The GroEL-GroES system forms a nano-cage that allows encapsulation of the non-native substrate proteins and provides a physical environment optimized to promote and accelerate protein folding. The chain is Chaperonin GroEL from Aquifex aeolicus (strain VF5).